Reading from the N-terminus, the 76-residue chain is Theta defensin subunit B (76 aa).

The N-terminal stretch at 1–22 is a signal peptide; that stretch reads MRTFALLTAMLLLVALQPQAEA. Residues 23 to 64 constitute a propeptide that is removed on maturation; that stretch reads RQARADEAAAQQQPGADDQGMAHSFTRPENAALPLSESAKGL. Positions 24–54 are disordered; the sequence is QARADEAAAQQQPGADDQGMAHSFTRPENAA. Positions 30 to 44 are enriched in low complexity; sequence AAAQQQPGADDQGMA. Arg65 participates in a covalent cross-link: Cyclopeptide (Arg-Cys) (interchain with C-73 in subunit A); in form BTD-1. Arg65 is covalently cross-linked (Cyclopeptide (Arg-Cys) (interchain with C-73 in subunit B); in form BTD-2). A disulfide bridge links Cys68 with Cys73. Cys73 participates in a covalent cross-link: Cyclopeptide (Cys-Arg) (interchain with R-65 in subunit A); in form BTD-1. Residue Cys73 forms a Cyclopeptide (Cys-Arg) (interchain with R-65 in subunit B); in form BTD-2 linkage. The propeptide occupies 74 to 76; sequence QLL.

This sequence belongs to the alpha-defensin family. Theta subfamily. In terms of assembly, BTD-1 is a cyclic heterodimer composed of subunits A and B; disulfide-linked. BTD-2 is a cyclic homodimer composed of two subunits B; disulfide-linked. Forms a cyclic peptide with subunit A (BTD-1), or subunit B (BTD-2). An additional intersubunit disulfide bond is formed.

Its function is as follows. BTD-1 and BTD-2 have antimicrobial activity against the Gram-negative bacterium E.coli ML35, the Gram-positive bacterium S.aureus 502a, and the fungus C.albicans 16820. BTD-2 is more effective against E.coli than BTD-1. This Papio anubis (Olive baboon) protein is Theta defensin subunit B (BTDB).